Reading from the N-terminus, the 268-residue chain is 14-3-3-like protein GF14 iota (268 aa).

A phosphoserine mark is found at serine 70 and serine 193. Phosphothreonine is present on threonine 214. The disordered stretch occupies residues 240–268; it reads DLPEDGGEDNIKTEESKQEQAKPADATEN. Positions 248 to 261 are enriched in basic and acidic residues; sequence DNIKTEESKQEQAK.

Belongs to the 14-3-3 family. Expressed in flowers.

The protein resides in the nucleus. Its subcellular location is the cytoplasm. Functionally, is associated with a DNA binding complex that binds to the G box, a well-characterized cis-acting DNA regulatory element found in plant genes. The protein is 14-3-3-like protein GF14 iota of Arabidopsis thaliana (Mouse-ear cress).